Here is a 139-residue protein sequence, read N- to C-terminus: Probable cytochrome b5 (139 aa).

The region spanning 2–78 (SAEFTYQDVA…LEPLLVGTLK (77 aa)) is the Cytochrome b5 heme-binding domain. The heme site is built by His37 and His61. A helical transmembrane segment spans residues 105 to 125 (GLGIGLYAVLVLGGLAGFAAY).

Belongs to the cytochrome b5 family.

The protein localises to the endoplasmic reticulum membrane. It is found in the microsome membrane. Its function is as follows. Membrane bound hemoprotein which function as an electron carrier for several membrane bound oxygenases. The polypeptide is Probable cytochrome b5 (Neurospora crassa (strain ATCC 24698 / 74-OR23-1A / CBS 708.71 / DSM 1257 / FGSC 987)).